A 344-amino-acid chain; its full sequence is Uroporphyrinogen decarboxylase (344 aa).

Substrate contacts are provided by residues 26-30, Asp76, Tyr151, Ser206, and His321; that span reads RQAGR.

Belongs to the uroporphyrinogen decarboxylase family. In terms of assembly, homodimer.

It localises to the cytoplasm. The catalysed reaction is uroporphyrinogen III + 4 H(+) = coproporphyrinogen III + 4 CO2. It participates in porphyrin-containing compound metabolism; protoporphyrin-IX biosynthesis; coproporphyrinogen-III from 5-aminolevulinate: step 4/4. In terms of biological role, catalyzes the decarboxylation of four acetate groups of uroporphyrinogen-III to yield coproporphyrinogen-III. The protein is Uroporphyrinogen decarboxylase of Sinorhizobium fredii (strain NBRC 101917 / NGR234).